We begin with the raw amino-acid sequence, 374 residues long: Potassium channel subfamily K member 9 (374 aa).

Over 1-8 the chain is Cytoplasmic; the sequence is MKRQNVRT. A helical membrane pass occupies residues 9–29; that stretch reads LSLIICTFTYLLVGAAVFDAL. At 30 to 88 the chain is on the extracellular side; it reads ESDYEMREEEKLKAEEIRLKGKYNISSEDYRQLELVIMQSEPHRAGVQWKFAGSFYFAI. A glycan (N-linked (GlcNAc...) asparagine) is linked at Asn53. The segment at residues 89–101 is an intramembrane region (pore-forming); it reads TVITTIGYGHAAP. The Extracellular portion of the chain corresponds to 102–107; that stretch reads GTDAGK. The chain crosses the membrane as a helical span at residues 108–128; that stretch reads AFCMFYAVLGIPLTLVMFQSL. Residues 129–158 lie on the Cytoplasmic side of the membrane; the sequence is GERMNTFVKYLLKRIKKCCGMHSTDVSMEN. A helical transmembrane segment spans residues 159 to 179; it reads MVTVGFFSCMGTLCIGAAAFS. Over 180–194 the chain is Extracellular; sequence HYEEWSFFQAYYYCF. The pore-forming intramembrane region spans 195-207; that stretch reads ITLTTIGFGDYVA. Topologically, residues 208–218 are extracellular; it reads LQKNRALQKKP. The chain crosses the membrane as a helical span at residues 219 to 239; it reads LYVAFSFMYILVGLTVIGAFL. At 240–374 the chain is on the cytoplasmic side; it reads NLVVLRFLTM…HRLMKRRKSI (135 aa).

This sequence belongs to the two pore domain potassium channel (TC 1.A.1.8) family. Homodimer. May form heterodimers with other family members.

The protein localises to the cell membrane. In terms of biological role, pH-dependent, voltage-insensitive, background potassium channel protein. This Xenopus laevis (African clawed frog) protein is Potassium channel subfamily K member 9 (kcnk9).